The primary structure comprises 350 residues: uncharacterized protein (350 aa).

A run of 3 helical transmembrane segments spans residues 10-30 (YSFI…EVIG), 51-71 (FAGI…VTLT), and 327-347 (ILSL…LKLF).

This sequence belongs to the 1-acyl-sn-glycerol-3-phosphate acyltransferase family.

The protein localises to the endoplasmic reticulum membrane. This is an uncharacterized protein from Schizosaccharomyces pombe (strain 972 / ATCC 24843) (Fission yeast).